The primary structure comprises 156 residues: Acyl carrier protein, mitochondrial (156 aa).

Residues 1-68 (MAVRVLCACV…GRVTQLCRQY (68 aa)) constitute a mitochondrion transit peptide. A Carrier domain is found at 77–152 (EGIKDRVLYV…EIVDYIADKK (76 aa)). The residue at position 88 (K88) is an N6-acetyllysine. At S112 the chain carries O-(pantetheine 4'-phosphoryl)serine.

In terms of assembly, mammalian complex I is composed of 45 different subunits. Interacts with ETFRF1. Identified in a complex composed of MALSU1, MIEF1 upstream open reading frame protein and NDUFAB1; within the trimeric complex MIEF1 upstream open reading frame protein functions as a bridging scaffold that interacts with MALSU1 on one side, and with NDUFAB1 on the other side. The complex interacts with the mitochondrial large ribosomal subunit. Interacts with alpha-1-microglobulin chain; this interaction is required for the maintenance of mitochondrial redox homeostasis. Component of the mitochondrial core iron-sulfur cluster (ISC) complex composed of NFS1, LYRM4, NDUFAB1, ISCU, FXN, and FDX2; this complex is a heterohexamer containing two copies of each monomer. Component of the cyteine desulfurase complex composed of NFS1, LYRM4 and NDUFAB1; this complex contributes to the stability and cysteine desulfurase activity of NFS1. Post-translationally, phosphopantetheinylation at Ser-112 is essential for interactions with LYR motif-containing proteins.

The protein resides in the mitochondrion. In terms of biological role, carrier of the growing fatty acid chain in fatty acid biosynthesis. Accessory and non-catalytic subunit of the mitochondrial membrane respiratory chain NADH dehydrogenase (Complex I), which functions in the transfer of electrons from NADH to the respiratory chain. Accessory protein, of the core iron-sulfur cluster (ISC) assembly complex, that regulates, in association with LYRM4, the stability and the cysteine desulfurase activity of NFS1 and participates in the [2Fe-2S] clusters assembly on the scaffolding protein ISCU. The core iron-sulfur cluster (ISC) assembly complex is involved in the de novo synthesis of a [2Fe-2S] cluster, the first step of the mitochondrial iron-sulfur protein biogenesis. This process is initiated by the cysteine desulfurase complex (NFS1:LYRM4:NDUFAB1) that produces persulfide which is delivered on the scaffold protein ISCU in a FXN-dependent manner. Then this complex is stabilized by FDX2 which provides reducing equivalents to accomplish the [2Fe-2S] cluster assembly. Finally, the [2Fe-2S] cluster is transferred from ISCU to chaperone proteins, including HSCB, HSPA9 and GLRX5. The protein is Acyl carrier protein, mitochondrial of Bos taurus (Bovine).